The chain runs to 618 residues: Transcriptional regulator CPUR_05421 (618 aa).

The zn(2)-C6 fungal-type DNA-binding region spans 14–41 (CSHLVGREIGCSRDLAGCRRCTSEGRAC). A disordered region spans residues 52 to 87 (TRRRNRANQDVTRSALYSSNTTPQTISDQATGRPCE). Polar residues predominate over residues 59 to 81 (NQDVTRSALYSSNTTPQTISDQA).

It is found in the nucleus. In terms of biological role, transcriptional regulator; part of the ergochrome gene cluster responsible for the typical purple-black color of the ergot sclerotia. The ergochrome gene cluster produces several ergot pigments including the yellow ergochrome secalonic acid and its derivatives, as well as the red anthraquinones endocrocin and clavorubin. The polypeptide is Transcriptional regulator CPUR_05421 (Claviceps purpurea (strain 20.1) (Ergot fungus)).